Reading from the N-terminus, the 374-residue chain is DNA replication and repair protein RecF (374 aa).

34–41 (GDNGAGKT) provides a ligand contact to ATP.

The protein belongs to the RecF family.

It is found in the cytoplasm. Its function is as follows. The RecF protein is involved in DNA metabolism; it is required for DNA replication and normal SOS inducibility. RecF binds preferentially to single-stranded, linear DNA. It also seems to bind ATP. In Rhizobium etli (strain ATCC 51251 / DSM 11541 / JCM 21823 / NBRC 15573 / CFN 42), this protein is DNA replication and repair protein RecF.